A 186-amino-acid chain; its full sequence is Peptidoglycan-recognition protein SD (186 aa).

Residues 1 to 18 (MTWIGLLIVGLTAIAVQG) form the signal peptide. Residues 47–169 (AVIAHTAGGA…RQVSATKSPG (123 aa)) enclose the N-acetylmuramoyl-L-alanine amidase domain. A disulfide bridge connects residues cysteine 57 and cysteine 63. Asparagine 181 is a glycosylation site (N-linked (GlcNAc...) asparagine).

Belongs to the N-acetylmuramoyl-L-alanine amidase 2 family. In larvae, it is mainly expressed in fat body. Also expressed in uninduced hemocytes and mbn-2 cells.

Its subcellular location is the secreted. Peptidoglycan-recognition protein that plays a key role in innate immunity by binding to peptidoglycans (PGN) of Gram-positive bacteria and activating the Toll pathway. Has no activity against on Gram-negative bacteria and fungi. Shows some partial redundancy with PRPGP-SA in Gram-positive bacteria recognition. May act by activating the proteolytic cleavage of Spatzle and the subsequent activation of Toll pathway. Recognizes S.aureus PGN. The protein is Peptidoglycan-recognition protein SD (PGRP-SD) of Drosophila melanogaster (Fruit fly).